The sequence spans 469 residues: Cysteine--tRNA ligase (469 aa).

C29 provides a ligand contact to Zn(2+). Positions 31–41 (PTVYNYIHIGN) match the 'HIGH' region motif. Zn(2+)-binding residues include C210, H235, and E239. A 'KMSKS' region motif is present at residues 267–271 (KMSKS). Position 270 (K270) interacts with ATP.

Belongs to the class-I aminoacyl-tRNA synthetase family. Monomer. Zn(2+) serves as cofactor.

The protein resides in the cytoplasm. The enzyme catalyses tRNA(Cys) + L-cysteine + ATP = L-cysteinyl-tRNA(Cys) + AMP + diphosphate. The chain is Cysteine--tRNA ligase from Thermosipho melanesiensis (strain DSM 12029 / CIP 104789 / BI429).